The sequence spans 335 residues: Flagellar P-ring protein (335 aa).

The first 17 residues, 1–17 (MNKLMLMLITFATSLLA), serve as a signal peptide directing secretion.

This sequence belongs to the FlgI family. As to quaternary structure, the basal body constitutes a major portion of the flagellar organelle and consists of four rings (L,P,S, and M) mounted on a central rod.

Its subcellular location is the periplasm. It localises to the bacterial flagellum basal body. In terms of biological role, assembles around the rod to form the L-ring and probably protects the motor/basal body from shearing forces during rotation. This is Flagellar P-ring protein (flgI) from Borreliella burgdorferi (strain ATCC 35210 / DSM 4680 / CIP 102532 / B31) (Borrelia burgdorferi).